We begin with the raw amino-acid sequence, 259 residues long: Thiazole synthase (259 aa).

Residue Lys-98 is the Schiff-base intermediate with DXP of the active site. Residues Gly-159, Ala-185–Gly-186, and Asn-207–Ser-208 each bind 1-deoxy-D-xylulose 5-phosphate.

The protein belongs to the ThiG family. As to quaternary structure, homotetramer. Forms heterodimers with either ThiH or ThiS.

The protein resides in the cytoplasm. The enzyme catalyses [ThiS sulfur-carrier protein]-C-terminal-Gly-aminoethanethioate + 2-iminoacetate + 1-deoxy-D-xylulose 5-phosphate = [ThiS sulfur-carrier protein]-C-terminal Gly-Gly + 2-[(2R,5Z)-2-carboxy-4-methylthiazol-5(2H)-ylidene]ethyl phosphate + 2 H2O + H(+). It functions in the pathway cofactor biosynthesis; thiamine diphosphate biosynthesis. In terms of biological role, catalyzes the rearrangement of 1-deoxy-D-xylulose 5-phosphate (DXP) to produce the thiazole phosphate moiety of thiamine. Sulfur is provided by the thiocarboxylate moiety of the carrier protein ThiS. In vitro, sulfur can be provided by H(2)S. This Chlorobium phaeobacteroides (strain BS1) protein is Thiazole synthase.